The following is a 356-amino-acid chain: Serendipity locus protein beta (356 aa).

Residues 171–193 (IPCHICGEMFSSQEVLERHIKAD) form a C2H2-type 1; degenerate zinc finger. 5 C2H2-type zinc fingers span residues 201–223 (ATCNVCGLKVKDDEVLDLHMNLH), 229–251 (LECRYCDKKFSHKRNVLRHMEVH), 257–279 (YQCDKCGERFSLSWLMYNHLMRH), 286–308 (LICEVCHQQFKTKRTYKHHLRTH), and 315–337 (YPCPDCEKSFVDKYTLKVHKRVH).

In terms of assembly, binds chromatin; requires N-terminal regions to form protein-protein contacts, in addition to DNA specific recognition by the zinc fingers.

Its subcellular location is the nucleus. Its function is as follows. Binds to the consensus DNA sequence 5'-YCAGAGATGCGCA-3'. This chain is Serendipity locus protein beta (Sry-beta), found in Drosophila melanogaster (Fruit fly).